Reading from the N-terminus, the 343-residue chain is Anthranilate phosphoribosyltransferase (343 aa).

5-phospho-alpha-D-ribose 1-diphosphate-binding positions include G78, 81–82, T86, 88–91, 106–114, and S118; these read GD, NIST, and KHGNRSVSS. G78 contacts anthranilate. S90 is a binding site for Mg(2+). Residue N109 participates in anthranilate binding. Anthranilate is bound at residue R164. Residues D223 and E224 each contribute to the Mg(2+) site.

The protein belongs to the anthranilate phosphoribosyltransferase family. As to quaternary structure, homodimer. The cofactor is Mg(2+).

The catalysed reaction is N-(5-phospho-beta-D-ribosyl)anthranilate + diphosphate = 5-phospho-alpha-D-ribose 1-diphosphate + anthranilate. Its pathway is amino-acid biosynthesis; L-tryptophan biosynthesis; L-tryptophan from chorismate: step 2/5. Functionally, catalyzes the transfer of the phosphoribosyl group of 5-phosphorylribose-1-pyrophosphate (PRPP) to anthranilate to yield N-(5'-phosphoribosyl)-anthranilate (PRA). The polypeptide is Anthranilate phosphoribosyltransferase (Chlamydia caviae (strain ATCC VR-813 / DSM 19441 / 03DC25 / GPIC) (Chlamydophila caviae)).